Reading from the N-terminus, the 51-residue chain is Putative ribosomal protein eL39-like 5 (51 aa).

This sequence belongs to the eukaryotic ribosomal protein eL39 family.

This is Putative ribosomal protein eL39-like 5 (RPL39P5) from Homo sapiens (Human).